A 195-amino-acid chain; its full sequence is Interferon tau-1 (195 aa).

The signal sequence occupies residues 1–23 (MAFVLSLLMALVLVSYGPGGSLG). 2 disulfide bridges follow: C24–C122 and C52–C162.

Belongs to the alpha/beta interferon family. IFN-alphaII subfamily. In terms of tissue distribution, constitutively and exclusively expressed in the mononuclear cells of the extraembryonic trophectoderm.

The protein resides in the secreted. Paracrine hormone primarily responsible for maternal recognition of pregnancy. Interacts with endometrial receptors, probably type I interferon receptors, and blocks estrogen receptor expression, preventing the estrogen-induced increase in oxytocin receptor expression in the endometrium. This results in the suppression of the pulsatile endometrial release of the luteolytic hormone prostaglandin F2-alpha, hindering the regression of the corpus luteum (luteolysis) and therefore a return to ovarian cyclicity. This, and a possible direct effect of IFN-tau on prostaglandin synthesis, leads in turn to continued ovarian progesterone secretion, which stimulates the secretion by the endometrium of the nutrients required for the growth of the conceptus. In summary, displays particularly high antiviral and antiproliferative potency concurrently with particular weak cytotoxicity, high antiluteolytic activity and immunomodulatory properties. In contrast with other IFNs, IFN-tau is not virally inducible. In Ovis aries (Sheep), this protein is Interferon tau-1 (IFNT1).